Reading from the N-terminus, the 425-residue chain is Serine--tRNA ligase (425 aa).

230–232 (TAE) contacts L-serine. 261-263 (RSE) serves as a coordination point for ATP. L-serine is bound at residue Glu-284. 348-351 (EISS) provides a ligand contact to ATP. Ser-384 is a binding site for L-serine.

It belongs to the class-II aminoacyl-tRNA synthetase family. Type-1 seryl-tRNA synthetase subfamily. In terms of assembly, homodimer. The tRNA molecule binds across the dimer.

It is found in the cytoplasm. The catalysed reaction is tRNA(Ser) + L-serine + ATP = L-seryl-tRNA(Ser) + AMP + diphosphate + H(+). It catalyses the reaction tRNA(Sec) + L-serine + ATP = L-seryl-tRNA(Sec) + AMP + diphosphate + H(+). The protein operates within aminoacyl-tRNA biosynthesis; selenocysteinyl-tRNA(Sec) biosynthesis; L-seryl-tRNA(Sec) from L-serine and tRNA(Sec): step 1/1. In terms of biological role, catalyzes the attachment of serine to tRNA(Ser). Is also able to aminoacylate tRNA(Sec) with serine, to form the misacylated tRNA L-seryl-tRNA(Sec), which will be further converted into selenocysteinyl-tRNA(Sec). This Streptococcus pyogenes serotype M4 (strain MGAS10750) protein is Serine--tRNA ligase.